The chain runs to 337 residues: Hsp90 co-chaperone Cdc37-like 1 (337 aa).

Over residues 1-11 (MEQPWPPPGPW) the composition is skewed to pro residues. The interval 1 to 40 (MEQPWPPPGPWSLPRAEGEAEEESDFDVFPSSPRCPQLPG) is disordered. The interval 2–171 (EQPWPPPGPW…YEQKIRHFGM (170 aa)) is self-association. Phosphoserine is present on residues S32 and S88. A coiled-coil region spans residues 84 to 122 (HNSESLDQEHAKAQTAVSELRQREEEWRQKEEALVQREK). A self-association and interaction with Hsp90 region spans residues 147–277 (KDTEDEDKSE…SRVRLYSQSQ (131 aa)). Residues 267–337 (KSRVRLYSQS…DDEPKMMDTV (71 aa)) form an interaction with Hsp70 region. The tract at residues 278 to 337 (SFQPMTVQNHVPHSGVGSIGLLESLPQNPDYLQYSISTALCSLNSVVHKEDDEPKMMDTV) is required for interaction with STIP1.

This sequence belongs to the CDC37 family. Self-associates. Forms complexes with Hsp70 and Hsp90. Interacts with CDC37, FKBP4, PPID and STIP1. In terms of tissue distribution, expressed in brain, heart, kidney, liver, placenta and skeletal muscle.

The protein localises to the cytoplasm. Functionally, co-chaperone that binds to numerous proteins and promotes their interaction with Hsp70 and Hsp90. The protein is Hsp90 co-chaperone Cdc37-like 1 (CDC37L1) of Homo sapiens (Human).